The primary structure comprises 466 residues: Cocosin 1 (466 aa).

A signal peptide spans 1 to 22 (MGSSSLLSFSLCLLLLCHLSQA). Disulfide bonds link cysteine 45-cysteine 78 and cysteine 121-cysteine 288. Cupin type-1 domains follow at residues 50–242 (LNAL…ELAR) and 294–443 (QNIG…DEAR).

The protein belongs to the 11S seed storage protein (globulins) family. Hexamer; each subunit is composed of an acidic and a basic chain derived from a single precursor and linked by a disulfide bond. In terms of tissue distribution, endosperm of the seeds.

In terms of biological role, seed storage protein. This chain is Cocosin 1, found in Cocos nucifera (Coconut palm).